Reading from the N-terminus, the 202-residue chain is ATP-dependent Clp protease proteolytic subunit (202 aa).

S101 (nucleophile) is an active-site residue. The active site involves H126.

The protein belongs to the peptidase S14 family. As to quaternary structure, component of the chloroplastic Clp protease core complex.

The protein localises to the plastid. Its subcellular location is the chloroplast stroma. It catalyses the reaction Hydrolysis of proteins to small peptides in the presence of ATP and magnesium. alpha-casein is the usual test substrate. In the absence of ATP, only oligopeptides shorter than five residues are hydrolyzed (such as succinyl-Leu-Tyr-|-NHMec, and Leu-Tyr-Leu-|-Tyr-Trp, in which cleavage of the -Tyr-|-Leu- and -Tyr-|-Trp bonds also occurs).. In terms of biological role, cleaves peptides in various proteins in a process that requires ATP hydrolysis. Has a chymotrypsin-like activity. Plays a major role in the degradation of misfolded proteins. The chain is ATP-dependent Clp protease proteolytic subunit from Acorus gramineus (Dwarf sweet flag).